Here is a 411-residue protein sequence, read N- to C-terminus: Pyruvate dehydrogenase E1 component subunit alpha, mitochondrial (411 aa).

The transit peptide at 1–29 (MFSRAVRLSRAALPIRVASQRVPIAARRS) directs the protein to the mitochondrion. Pyruvate contacts are provided by histidine 111, tyrosine 137, arginine 138, glycine 184, valine 186, aspartate 215, glycine 216, alanine 217, asparagine 244, and tyrosine 246. Tyrosine 137, arginine 138, glycine 184, valine 186, aspartate 215, glycine 216, alanine 217, and asparagine 244 together coordinate thiamine diphosphate. Aspartate 215 is a Mg(2+) binding site. Residues asparagine 244 and tyrosine 246 each coordinate Mg(2+). Histidine 311 is a thiamine diphosphate binding site.

In terms of assembly, eukaryotic pyruvate dehydrogenase (PDH) complexes are organized as a core consisting of the oligomeric dihydrolipoamide acetyl-transferase (E2), around which are arranged multiple copies of pyruvate dehydrogenase (E1), dihydrolipoamide dehydrogenase (E3) and protein X (E3BP) bound by non-covalent bonds. The Chaetomium thermophilum PDH complex contains 60 E2 units, 12 E3BP units, about 20 E1 units, and 12 or more E3 units. The units are organized in 1 E2 60-mer, 4 E3BP trimers, about 20 E1 tetramers, and a maximum of 12 E3 dimers. Pyruvate dehydrogenase (E1) is active as a tetramer of 2 alpha and 2 beta subunits. The E3BP trimers are bound inside the icosahedral core with tetrahedral symmetry. The cofactor is thiamine diphosphate. Mg(2+) serves as cofactor.

The protein localises to the mitochondrion. The catalysed reaction is N(6)-[(R)-lipoyl]-L-lysyl-[protein] + pyruvate + H(+) = N(6)-[(R)-S(8)-acetyldihydrolipoyl]-L-lysyl-[protein] + CO2. In terms of biological role, the 10-megadalton pyruvate dehydrogenase complex contains multiple copies of three enzymatic components: pyruvate dehydrogenase (E1), dihydrolipoamide acetyltransferase (E2) and lipoamide dehydrogenase (E3) and catalyzes the overall oxidative decarboxylation of pyruvate to form acetyl-CoA and CO(2). Within the complex, pyruvate and thiamine pyrophosphate (TPP or vitamin B1) are bound by pyruvate dehydrogenase E1 subunits alpha and beta and pyruvate is decarboxylated leading to the 2-carbon hydrohyethyl bound to TPP. The E2 component contains covalently-bound lipoyl cofactors and transfers the hydroxyethyl group from TPP to an oxidized form of covalently bound lipoamide, and the resulting acetyl group is then transferred to free coenzyme A to form acetyl-CoA and reduced dihydrolipoamide-E2. Finally, the flavoprotein dihydrolipoamide dehydrogenase (E3) re-oxidizes the lipoyl group of dihydrolipoamide-E2 to form lipoamide-E2 and NADH. A fourth subunit, E3BP, is responsible for tethering E3 in proximity to the core, forming the entire metabolon. This chain is Pyruvate dehydrogenase E1 component subunit alpha, mitochondrial, found in Chaetomium thermophilum (strain DSM 1495 / CBS 144.50 / IMI 039719) (Thermochaetoides thermophila).